We begin with the raw amino-acid sequence, 228 residues long: Orotate phosphoribosyltransferase (228 aa).

Residue Lys-26 participates in 5-phospho-alpha-D-ribose 1-diphosphate binding. Residue 34–35 (FF) coordinates orotate. 5-phospho-alpha-D-ribose 1-diphosphate-binding positions include 72–73 (YK), Arg-98, Lys-99, Lys-102, His-104, and 123–131 (DDVISAGTS). Positions 127 and 155 each coordinate orotate.

This sequence belongs to the purine/pyrimidine phosphoribosyltransferase family. PyrE subfamily. As to quaternary structure, homodimer. The cofactor is Mg(2+).

The catalysed reaction is orotidine 5'-phosphate + diphosphate = orotate + 5-phospho-alpha-D-ribose 1-diphosphate. It participates in pyrimidine metabolism; UMP biosynthesis via de novo pathway; UMP from orotate: step 1/2. Functionally, catalyzes the transfer of a ribosyl phosphate group from 5-phosphoribose 1-diphosphate to orotate, leading to the formation of orotidine monophosphate (OMP). This Nitrosospira multiformis (strain ATCC 25196 / NCIMB 11849 / C 71) protein is Orotate phosphoribosyltransferase.